Reading from the N-terminus, the 147-residue chain is Mediator of RNA polymerase II transcription subunit 10 (147 aa).

Belongs to the Mediator complex subunit 10 family. In terms of assembly, component of the Mediator complex.

Its subcellular location is the nucleus. In terms of biological role, component of the Mediator complex, a coactivator involved in the regulated transcription of nearly all RNA polymerase II-dependent genes. Mediator functions as a bridge to convey information from gene-specific regulatory proteins to the basal RNA polymerase II transcription machinery. Mediator is recruited to promoters by direct interactions with regulatory proteins and serves as a scaffold for the assembly of a functional preinitiation complex with RNA polymerase II and the general transcription factors. The protein is Mediator of RNA polymerase II transcription subunit 10 (NUT2) of Debaryomyces hansenii (strain ATCC 36239 / CBS 767 / BCRC 21394 / JCM 1990 / NBRC 0083 / IGC 2968) (Yeast).